A 77-amino-acid polypeptide reads, in one-letter code: Translational regulator CsrA (77 aa).

The protein belongs to the CsrA/RsmA family. In terms of assembly, homodimer; the beta-strands of each monomer intercalate to form a hydrophobic core, while the alpha-helices form wings that extend away from the core.

Its subcellular location is the cytoplasm. Functionally, a translational regulator that binds mRNA to regulate translation initiation and/or mRNA stability. Usually binds in the 5'-UTR at or near the Shine-Dalgarno sequence preventing ribosome-binding, thus repressing translation. Its main target seems to be the major flagellin gene, while its function is anatagonized by FliW. This Desulfitobacterium hafniense (strain DSM 10664 / DCB-2) protein is Translational regulator CsrA.